Reading from the N-terminus, the 1495-residue chain is DNA-directed RNA polymerase subunit 1 (1495 aa).

It belongs to the RNA polymerase beta' chain family.

Its subcellular location is the virion. It catalyses the reaction RNA(n) + a ribonucleoside 5'-triphosphate = RNA(n+1) + diphosphate. In terms of biological role, DNA-dependent RNA polymerase catalyzes the transcription of DNA into RNA using the four ribonucleoside triphosphates as substrates. The chain is DNA-directed RNA polymerase subunit 1 (RPO1) from Acanthamoeba polyphaga (Amoeba).